The primary structure comprises 416 residues: Succinate--CoA ligase [ADP-forming] subunit beta (416 aa).

The transit peptide at 1–14 (MLRMAPKTVGAVRN) directs the protein to the hydrogenosome. ATP is bound by residues lysine 64, 71-73 (GRG), and glutamate 132. Mg(2+)-binding residues include asparagine 224 and aspartate 242. Substrate contacts are provided by residues asparagine 293 and 350–352 (GIM).

The protein belongs to the succinate/malate CoA ligase beta subunit family. Heterodimer of an alpha and a beta subunit. Mg(2+) is required as a cofactor.

The protein localises to the hydrogenosome. The enzyme catalyses succinate + ATP + CoA = succinyl-CoA + ADP + phosphate. The protein operates within carbohydrate metabolism; tricarboxylic acid cycle; succinate from succinyl-CoA (ligase route): step 1/1. Succinyl-CoA synthetase functions in the citric acid cycle (TCA), coupling the hydrolysis of succinyl-CoA to the synthesis of ATP and thus represents the only step of substrate-level phosphorylation in the TCA. The beta subunit provides nucleotide specificity of the enzyme and binds the substrate succinate, while the binding sites for coenzyme A and phosphate are found in the alpha subunit. The sequence is that of Succinate--CoA ligase [ADP-forming] subunit beta (SCSb) from Blastocystis sp. subtype 1 (strain ATCC 50177 / NandII).